A 372-amino-acid polypeptide reads, in one-letter code: Anhydro-N-acetylmuramic acid kinase (372 aa).

Position 14–21 (14–21) interacts with ATP; that stretch reads GTSLDGVD.

This sequence belongs to the anhydro-N-acetylmuramic acid kinase family.

The catalysed reaction is 1,6-anhydro-N-acetyl-beta-muramate + ATP + H2O = N-acetyl-D-muramate 6-phosphate + ADP + H(+). The protein operates within amino-sugar metabolism; 1,6-anhydro-N-acetylmuramate degradation. Its pathway is cell wall biogenesis; peptidoglycan recycling. Its function is as follows. Catalyzes the specific phosphorylation of 1,6-anhydro-N-acetylmuramic acid (anhMurNAc) with the simultaneous cleavage of the 1,6-anhydro ring, generating MurNAc-6-P. Is required for the utilization of anhMurNAc either imported from the medium or derived from its own cell wall murein, and thus plays a role in cell wall recycling. The chain is Anhydro-N-acetylmuramic acid kinase from Photorhabdus laumondii subsp. laumondii (strain DSM 15139 / CIP 105565 / TT01) (Photorhabdus luminescens subsp. laumondii).